The primary structure comprises 312 residues: Glyoxylate/hydroxypyruvate reductase A (312 aa).

Residue Arg227 is part of the active site. Residue His275 is the Proton donor of the active site.

It belongs to the D-isomer specific 2-hydroxyacid dehydrogenase family. GhrA subfamily.

It is found in the cytoplasm. The enzyme catalyses glycolate + NADP(+) = glyoxylate + NADPH + H(+). It catalyses the reaction (R)-glycerate + NAD(+) = 3-hydroxypyruvate + NADH + H(+). The catalysed reaction is (R)-glycerate + NADP(+) = 3-hydroxypyruvate + NADPH + H(+). Its function is as follows. Catalyzes the NADPH-dependent reduction of glyoxylate and hydroxypyruvate into glycolate and glycerate, respectively. This chain is Glyoxylate/hydroxypyruvate reductase A, found in Escherichia coli (strain SMS-3-5 / SECEC).